The following is a 334-amino-acid chain: MQLDNILSQLFENQALTKAESQYFFEQVIQGNVSNEQLAGALIALKVRGETIEEIAGAVEAAFANATTFPTPDYDFADIVGTGGDGQNTINISTASAIVAATLGYKVAKHGSRSVSSKTGASDVLSALGINVAISPQTARQALDENNLCFLFAPLYHAGFKHAVPVRQTLKTRTLFNILGPLVNPAHAKRQLLGVYSPEVLKIYAETVRTLNHQHSIVVYGSGLDEVAVHGETLVAEIEDDKIHYFSLIPEDFGVQRHSIEALRGGEPTENAEKITVLLQGKGEAAHIDAVAVNTAMLMRTFGERNLKANVQRVKDLLRTDKAYQTLQKLAQYQ.

5-phospho-alpha-D-ribose 1-diphosphate is bound by residues Gly-81, 84-85 (GD), Thr-89, 91-94 (NIST), 109-117 (KHGSRSVSS), and Ala-121. Gly-81 contributes to the anthranilate binding site. Position 93 (Ser-93) interacts with Mg(2+). Arg-167 contributes to the anthranilate binding site. Residues Asp-225 and Glu-226 each contribute to the Mg(2+) site.

Belongs to the anthranilate phosphoribosyltransferase family. Homodimer. Requires Mg(2+) as cofactor.

The enzyme catalyses N-(5-phospho-beta-D-ribosyl)anthranilate + diphosphate = 5-phospho-alpha-D-ribose 1-diphosphate + anthranilate. Its pathway is amino-acid biosynthesis; L-tryptophan biosynthesis; L-tryptophan from chorismate: step 2/5. Its function is as follows. Catalyzes the transfer of the phosphoribosyl group of 5-phosphorylribose-1-pyrophosphate (PRPP) to anthranilate to yield N-(5'-phosphoribosyl)-anthranilate (PRA). The protein is Anthranilate phosphoribosyltransferase of Actinobacillus pleuropneumoniae serotype 5b (strain L20).